The primary structure comprises 169 residues: Probable chemoreceptor glutamine deamidase CheD (169 aa).

The protein belongs to the CheD family.

The enzyme catalyses L-glutaminyl-[protein] + H2O = L-glutamyl-[protein] + NH4(+). Probably deamidates glutamine residues to glutamate on methyl-accepting chemotaxis receptors (MCPs), playing an important role in chemotaxis. In Solibacter usitatus (strain Ellin6076), this protein is Probable chemoreceptor glutamine deamidase CheD.